The sequence spans 345 residues: Biotin synthase (345 aa).

The 229-residue stretch at 67-295 (YKVQLASLLS…KSRIRLSAGR (229 aa)) folds into the Radical SAM core domain. [4Fe-4S] cluster is bound by residues cysteine 82, cysteine 86, and cysteine 89. [2Fe-2S] cluster-binding residues include cysteine 126, cysteine 158, cysteine 218, and arginine 290.

It belongs to the radical SAM superfamily. Biotin synthase family. Homodimer. The cofactor is [4Fe-4S] cluster. [2Fe-2S] cluster is required as a cofactor.

The enzyme catalyses (4R,5S)-dethiobiotin + (sulfur carrier)-SH + 2 reduced [2Fe-2S]-[ferredoxin] + 2 S-adenosyl-L-methionine = (sulfur carrier)-H + biotin + 2 5'-deoxyadenosine + 2 L-methionine + 2 oxidized [2Fe-2S]-[ferredoxin]. It participates in cofactor biosynthesis; biotin biosynthesis; biotin from 7,8-diaminononanoate: step 2/2. Functionally, catalyzes the conversion of dethiobiotin (DTB) to biotin by the insertion of a sulfur atom into dethiobiotin via a radical-based mechanism. The protein is Biotin synthase of Prochlorococcus marinus (strain NATL2A).